Reading from the N-terminus, the 81-residue chain is Large ribosomal subunit protein bL31B (81 aa).

The protein belongs to the bacterial ribosomal protein bL31 family. Type B subfamily. In terms of assembly, part of the 50S ribosomal subunit.

This chain is Large ribosomal subunit protein bL31B, found in Exiguobacterium sibiricum (strain DSM 17290 / CCUG 55495 / CIP 109462 / JCM 13490 / 255-15).